The following is a 627-amino-acid chain: Glucokinase regulatory protein (627 aa).

SIS domains follow at residues 90–286 (VQEV…QGVV) and 320–499 (VGIS…LLGK). Residues 109–110 (TS), Glu153, and 179–181 (SVG) contribute to the beta-D-fructose 1-phosphate site. Beta-D-fructose 6-phosphate is bound at residue 109–110 (TS). 179–181 (SVG) is a binding site for beta-D-fructose 6-phosphate. Residues 199–200 (AV) form an important for interaction with GCK region. Residue Glu348 participates in beta-D-fructose 1-phosphate binding. The tract at residues 463–465 (LLF) is essential for interaction with GCK. Lys514 serves as a coordination point for beta-D-fructose 1-phosphate. Lys514 lines the beta-D-fructose 6-phosphate pocket.

The protein belongs to the GCKR family. In terms of assembly, interacts (fructose 6-phosphate bound form) with GCK. Detected in liver (at protein level). Not detected in muscle, brain, heart, testis, intestine or spleen.

It localises to the cytoplasm. Its subcellular location is the nucleus. The protein localises to the mitochondrion. Regulates glucokinase (GCK) by forming an inactive complex with this enzyme. Acts by promoting GCK recruitment to the nucleus, possibly to provide a reserve of GCK that can be quickly released in the cytoplasm after a meal. The affinity of GCKR for GCK is modulated by fructose metabolites: GCKR with bound fructose 6-phosphate has increased affinity for GCK, while GCKR with bound fructose 1-phosphate has strongly decreased affinity for GCK and does not inhibit GCK activity. This chain is Glucokinase regulatory protein, found in Rattus norvegicus (Rat).